Reading from the N-terminus, the 488-residue chain is Ribulose bisphosphate carboxylase large chain 1 (488 aa).

Substrate is bound by residues Asn127 and Thr177. Lys179 acts as the Proton acceptor in catalysis. Lys181 provides a ligand contact to substrate. 3 residues coordinate Mg(2+): Lys205, Asp207, and Glu208. Lys205 carries the post-translational modification N6-carboxylysine. His297 serves as the catalytic Proton acceptor. Substrate contacts are provided by Arg298, His330, and Ser382.

Belongs to the RuBisCO large chain family. Type I subfamily. As to quaternary structure, heterohexadecamer of 8 large chains and 8 small chains. Mg(2+) serves as cofactor.

It catalyses the reaction 2 (2R)-3-phosphoglycerate + 2 H(+) = D-ribulose 1,5-bisphosphate + CO2 + H2O. The enzyme catalyses D-ribulose 1,5-bisphosphate + O2 = 2-phosphoglycolate + (2R)-3-phosphoglycerate + 2 H(+). Its function is as follows. RuBisCO catalyzes two reactions: the carboxylation of D-ribulose 1,5-bisphosphate, the primary event in carbon dioxide fixation, as well as the oxidative fragmentation of the pentose substrate. Both reactions occur simultaneously and in competition at the same active site. The chain is Ribulose bisphosphate carboxylase large chain 1 from Bradyrhizobium sp. (strain BTAi1 / ATCC BAA-1182).